The following is a 302-amino-acid chain: DNA-directed RNA polymerase II subunit rpb3 (302 aa).

It belongs to the archaeal Rpo3/eukaryotic RPB3 RNA polymerase subunit family. Component of the RNA polymerase II (Pol II) complex consisting of 12 subunits.

The protein localises to the nucleus. DNA-dependent RNA polymerase catalyzes the transcription of DNA into RNA using the four ribonucleoside triphosphates as substrates. Component of RNA polymerase II which synthesizes mRNA precursors and many functional non-coding RNAs. Pol II is the central component of the basal RNA polymerase II transcription machinery. It is composed of mobile elements that move relative to each other. Rpb3 is part of the core element with the central large cleft and the clamp element that moves to open and close the cleft. In Dictyostelium discoideum (Social amoeba), this protein is DNA-directed RNA polymerase II subunit rpb3 (polr2c).